The primary structure comprises 66 residues: Large ribosomal subunit protein bL32 (66 aa).

Residues M1–T19 are compositionally biased toward basic residues. The disordered stretch occupies residues M1–S21.

It belongs to the bacterial ribosomal protein bL32 family.

The polypeptide is Large ribosomal subunit protein bL32 (Mycoplasmopsis synoviae (strain 53) (Mycoplasma synoviae)).